The following is a 407-amino-acid chain: Carbamoyl phosphate synthase small chain (407 aa).

Residues 1-203 form a CPSase region; the sequence is MSQNESGTIA…EPCGEYEGKE (203 aa). L-glutamine-binding residues include Ser-61, Gly-255, and Gly-257. A Glutamine amidotransferase type-1 domain is found at 207–405; sequence TVAAVDLGIK…CELMKNNSKE (199 aa). Cys-283 (nucleophile) is an active-site residue. Phe-284, Gln-287, Asn-325, Gly-327, and Phe-328 together coordinate L-glutamine. Catalysis depends on residues His-378 and Glu-380.

Belongs to the CarA family. As to quaternary structure, composed of two chains; the small (or glutamine) chain promotes the hydrolysis of glutamine to ammonia, which is used by the large (or ammonia) chain to synthesize carbamoyl phosphate. Tetramer of heterodimers (alpha,beta)4.

The enzyme catalyses hydrogencarbonate + L-glutamine + 2 ATP + H2O = carbamoyl phosphate + L-glutamate + 2 ADP + phosphate + 2 H(+). The catalysed reaction is L-glutamine + H2O = L-glutamate + NH4(+). It functions in the pathway amino-acid biosynthesis; L-arginine biosynthesis; carbamoyl phosphate from bicarbonate: step 1/1. It participates in pyrimidine metabolism; UMP biosynthesis via de novo pathway; (S)-dihydroorotate from bicarbonate: step 1/3. In terms of biological role, small subunit of the glutamine-dependent carbamoyl phosphate synthetase (CPSase). CPSase catalyzes the formation of carbamoyl phosphate from the ammonia moiety of glutamine, carbonate, and phosphate donated by ATP, constituting the first step of 2 biosynthetic pathways, one leading to arginine and/or urea and the other to pyrimidine nucleotides. The small subunit (glutamine amidotransferase) binds and cleaves glutamine to supply the large subunit with the substrate ammonia. This chain is Carbamoyl phosphate synthase small chain, found in Bifidobacterium longum (strain NCC 2705).